The primary structure comprises 132 residues: Putative RNase AF_2433 (132 aa).

Residues R90 and H95 contribute to the active site. The short motif at 90 to 97 (RNWLVHRY) is the RX(4)HXY motif element. Y97 is subject to O-di-AMP-tyrosine.

Belongs to the HepT RNase toxin family. In terms of assembly, homodimer, probably forms a complex with cognate antitoxin AF_2432. Post-translationally, modified by cognate antitoxin AF_2432; probably at least 2 successive AMPylation events occur on Tyr-97.

In terms of biological role, probable toxic component of a putative type VII toxin-antitoxin (TA) system, probably an RNase. Probably neutralized by cognate antitoxin AF_2432. Neutralization may be due to AMPylation by AF_2432. The polypeptide is Putative RNase AF_2433 (Archaeoglobus fulgidus (strain ATCC 49558 / DSM 4304 / JCM 9628 / NBRC 100126 / VC-16)).